The primary structure comprises 209 residues: tRNA (guanine-N(7)-)-methyltransferase (209 aa).

Residues Glu40, Glu65, and Asp114 each coordinate S-adenosyl-L-methionine. Asp114 is a catalytic residue. Substrate is bound by residues Asp150 and 188–191; that span reads TAFE.

Belongs to the class I-like SAM-binding methyltransferase superfamily. TrmB family.

It catalyses the reaction guanosine(46) in tRNA + S-adenosyl-L-methionine = N(7)-methylguanosine(46) in tRNA + S-adenosyl-L-homocysteine. Its pathway is tRNA modification; N(7)-methylguanine-tRNA biosynthesis. Functionally, catalyzes the formation of N(7)-methylguanine at position 46 (m7G46) in tRNA. The polypeptide is tRNA (guanine-N(7)-)-methyltransferase (Bdellovibrio bacteriovorus (strain ATCC 15356 / DSM 50701 / NCIMB 9529 / HD100)).